Here is a 347-residue protein sequence, read N- to C-terminus: Haptoglobin (347 aa).

The N-terminal stretch at 1–18 (MSALGAVIALLLWGQLFA) is a signal peptide. The Sushi domain maps to 31–88 (DGCPKPPQIAHGYVEHSVRYQCKNYYRLRTEGDGVYTLNSEKQWINKAVGDKLPECEA). 4 cysteine pairs are disulfide-bonded: Cys-52–Cys-86, Cys-90–Cys-207, Cys-250–Cys-281, and Cys-292–Cys-322. The Peptidase S1 domain maps to 103–347 (ILGGHLDAKG…DWVQKTIAKN (245 aa)). Asn-125, Asn-148, Asn-152, and Asn-182 each carry an N-linked (GlcNAc...) asparagine glycan. An interaction with CD163 region spans residues 259–264 (VPEKKT).

Belongs to the peptidase S1 family. As to quaternary structure, tetramer of two alpha and two beta chains; disulfide-linked. The hemoglobin/haptoglobin complex is composed of a haptoglobin dimer bound to two hemoglobin alpha-beta dimers. Interacts with CD163. Interacts with ERGIC3.

The protein localises to the secreted. Functionally, as a result of hemolysis, hemoglobin is found to accumulate in the kidney and is secreted in the urine. Haptoglobin captures, and combines with free plasma hemoglobin to allow hepatic recycling of heme iron and to prevent kidney damage. Haptoglobin also acts as an antioxidant, has antibacterial activity and plays a role in modulating many aspects of the acute phase response. Hemoglobin/haptoglobin complexes are rapidly cleared by the macrophage CD163 scavenger receptor expressed on the surface of liver Kupfer cells through an endocytic lysosomal degradation pathway. This is Haptoglobin (HP) from Pongo abelii (Sumatran orangutan).